The sequence spans 442 residues: MSEMTPREIVHELDAHIIGQQKAKRSVAVALRNRWRRMQLDVDFRQEVTPKNILMIGPTGVGKTEIARRLAKLANAPFIKVEATKYTEVGYVGKEVEQIIRDLTDIAIKLTREQQMGKCRQRAEENAEERILDALLPKPKNDWESTETDSSSNTRQVFRKKLREGQLDDKEIDIDVAQPQVGVEIMSPPGMEEMTNQLQSLFKNMGQAPAKRRKMKIKEAFKLLIEEEAAKLVNQEDLKEQAIEMVEQHGIVFLDEIDKICKRGETSGPDVSREGVQRDLLPLIEGCTVTTKHGMVKTDHILFIASGAFQMSKPSDLIPELQGRLPIRVELDALSANDFKRILTEPHASLTEQYIALMNTEGVKVEFSESGIDSIAKAAWQVNERTENIGARRLHTVMEKLMEDISYEASEKSGSAFVIDADYVSAHLDNLVQDEDLSRFIL.

ATP is bound by residues Ile18 and 60 to 65; that span reads GVGKTE. The segment at 137-156 is disordered; it reads PKPKNDWESTETDSSSNTRQ. Residues Asp255, Glu320, and Arg392 each contribute to the ATP site.

Belongs to the ClpX chaperone family. HslU subfamily. In terms of assembly, a double ring-shaped homohexamer of HslV is capped on each side by a ring-shaped HslU homohexamer. The assembly of the HslU/HslV complex is dependent on binding of ATP.

The protein localises to the cytoplasm. In terms of biological role, ATPase subunit of a proteasome-like degradation complex; this subunit has chaperone activity. The binding of ATP and its subsequent hydrolysis by HslU are essential for unfolding of protein substrates subsequently hydrolyzed by HslV. HslU recognizes the N-terminal part of its protein substrates and unfolds these before they are guided to HslV for hydrolysis. This Shewanella baltica (strain OS155 / ATCC BAA-1091) protein is ATP-dependent protease ATPase subunit HslU.